The chain runs to 868 residues: DNA replication licensing factor MCM2 (868 aa).

2 disordered regions span residues 1–65 (MSDN…DEVE) and 87–106 (NRDR…ELSL). Phosphoserine is present on residues S14, S16, and S23. Over residues 49-65 (EGDDNEVDDVPDIDEVE) the composition is skewed to acidic residues. Phosphoserine occurs at positions 164 and 170. The C4-type zinc finger occupies 341 to 367 (CLKCGSILGPFFQDSNEEIRISFCTNC). In terms of domain architecture, MCM spans 493–700 (IIDKIISSMA…ADERLATFVV (208 aa)). 543–550 (GDPGTAKS) lines the ATP pocket. The Arginine finger motif lies at 675 to 678 (SRFD). The tract at residues 704-728 (VRSHPENDEDREGEELKNNGESAIE) is disordered.

It belongs to the MCM family. In terms of assembly, component of the MCM2-7 complex. The complex forms a toroidal hexameric ring with the proposed subunit order MCM2-MCM6-MCM4-MCM7-MCM3-MCM5; loaded onto DNA, forms a head-head double hexamer.

It is found in the nucleus. The catalysed reaction is ATP + H2O = ADP + phosphate + H(+). Acts as a component of the MCM2-7 complex (MCM complex) which is the putative replicative helicase essential for 'once per cell cycle' DNA replication initiation and elongation in eukaryotic cells. The active ATPase sites in the MCM2-7 ring are formed through the interaction surfaces of two neighboring subunits such that a critical structure of a conserved arginine finger motif is provided in trans relative to the ATP-binding site of the Walker A box of the adjacent subunit. The six ATPase active sites, however, are likely to contribute differentially to the complex helicase activity; specifically the MCM2-MCM5 association is proposed to be reversible and to mediate a open ring conformation which may facilitate DNA loading. Once loaded onto DNA, double hexamers can slide on dsDNA in the absence of ATPase activity. Necessary for cell growth. In Saccharomyces cerevisiae (strain ATCC 204508 / S288c) (Baker's yeast), this protein is DNA replication licensing factor MCM2 (MCM2).